Here is a 730-residue protein sequence, read N- to C-terminus: 1,4-alpha-glucan branching enzyme GlgB (730 aa).

Residue aspartate 405 is the Nucleophile of the active site. Catalysis depends on glutamate 458, which acts as the Proton donor.

It belongs to the glycosyl hydrolase 13 family. GlgB subfamily. As to quaternary structure, monomer.

It catalyses the reaction Transfers a segment of a (1-&gt;4)-alpha-D-glucan chain to a primary hydroxy group in a similar glucan chain.. Its pathway is glycan biosynthesis; glycogen biosynthesis. Catalyzes the formation of the alpha-1,6-glucosidic linkages in glycogen by scission of a 1,4-alpha-linked oligosaccharide from growing alpha-1,4-glucan chains and the subsequent attachment of the oligosaccharide to the alpha-1,6 position. This Haemophilus influenzae (strain PittGG) protein is 1,4-alpha-glucan branching enzyme GlgB.